Consider the following 510-residue polypeptide: O-acetyltransferase pyr7 (510 aa).

This sequence belongs to the fumigaclavine B O-acetyltransferase family.

The protein operates within secondary metabolite biosynthesis; terpenoid biosynthesis. Its function is as follows. O-acetyltransferase; part of the gene cluster that mediates the biosynthesis of pyripyropene A, a specific human acyl-coenzyme A:cholesterol acyltransferase 2 inhibitor. The first step of the pathway is the synthesis of nicotinyl-CoA from nicotinic acid by the nicotinic acid-CoA ligase pyr1. Nicotinyl-CoA is then a substrate of polyketide synthase pyr2 to produce 4-hydroxy-6-(3-pyridinyl)-2H-pyran-2-one (HPPO) which is further prenylated by the polyprenyl transferase pyr6 to yield farnesyl-HPPO. The next steps consist of an epoxidation of farnesyl-HPPO to epoxyfarnesyl-HPPO by FAD-dependent monooxygenase pyr5 and a cyclization of the terpenoid portion by the terpene cyclase pyr4 to yield deacetyl-pyripyropene E. The 2 cytochrome P450 monooxygenases pyr3 and pyr9, and the 2 acetyltransferases pyr7 and pyr8 are involved in the conversion of deacetyl-pyripyropene E into pyripyropene A through several cycles of oxidation and acetylation steps. Pyr7 acetylates deacetyl-pyripyropene E to pyripyropene E which is oxidized to 11-deacetyl-pyripyropene O by pyr3, which is in turn acetylated into pyripyropene O by pyr8. Pyripyropene O is then oxidized to deacetyl-pyripyropene A by pyr9. Deacetyl-pyripyropene A is finally acetylated to pyripyropene A by pyr8. This Aspergillus fumigatus (strain ATCC MYA-4609 / CBS 101355 / FGSC A1100 / Af293) (Neosartorya fumigata) protein is O-acetyltransferase pyr7.